The primary structure comprises 257 residues: Imidazole glycerol phosphate synthase subunit HisF (257 aa).

Catalysis depends on residues aspartate 11 and aspartate 130.

Belongs to the HisA/HisF family. Heterodimer of HisH and HisF.

It is found in the cytoplasm. The enzyme catalyses 5-[(5-phospho-1-deoxy-D-ribulos-1-ylimino)methylamino]-1-(5-phospho-beta-D-ribosyl)imidazole-4-carboxamide + L-glutamine = D-erythro-1-(imidazol-4-yl)glycerol 3-phosphate + 5-amino-1-(5-phospho-beta-D-ribosyl)imidazole-4-carboxamide + L-glutamate + H(+). The protein operates within amino-acid biosynthesis; L-histidine biosynthesis; L-histidine from 5-phospho-alpha-D-ribose 1-diphosphate: step 5/9. Functionally, IGPS catalyzes the conversion of PRFAR and glutamine to IGP, AICAR and glutamate. The HisF subunit catalyzes the cyclization activity that produces IGP and AICAR from PRFAR using the ammonia provided by the HisH subunit. The protein is Imidazole glycerol phosphate synthase subunit HisF of Shewanella frigidimarina (strain NCIMB 400).